Reading from the N-terminus, the 430-residue chain is Enolase (430 aa).

Q167 contributes to the (2R)-2-phosphoglycerate binding site. The active-site Proton donor is E209. The Mg(2+) site is built by D245, E286, and D313. (2R)-2-phosphoglycerate is bound by residues K338, R367, S368, and K389. The active-site Proton acceptor is K338.

Belongs to the enolase family. Requires Mg(2+) as cofactor.

The protein localises to the cytoplasm. Its subcellular location is the secreted. It localises to the cell surface. The catalysed reaction is (2R)-2-phosphoglycerate = phosphoenolpyruvate + H2O. Its pathway is carbohydrate degradation; glycolysis; pyruvate from D-glyceraldehyde 3-phosphate: step 4/5. Functionally, catalyzes the reversible conversion of 2-phosphoglycerate (2-PG) into phosphoenolpyruvate (PEP). It is essential for the degradation of carbohydrates via glycolysis. This is Enolase from Synechococcus sp. (strain CC9311).